Consider the following 206-residue polypeptide: uncharacterized protein (206 aa).

The chain crosses the membrane as a helical span at residues 166-186 (FYTGLSVIVGGATALALGLFF).

The protein resides in the membrane. This is an uncharacterized protein from Dictyostelium discoideum (Social amoeba).